The chain runs to 73 residues: MGSFSIGHWLIVLAIIVLLFGAKKIPELAKGLGKGIKTFKAEMEDTTPEKSEKVEHKEESATSQKIEETTKNA.

A helical membrane pass occupies residues 1–21 (MGSFSIGHWLIVLAIIVLLFG). The tract at residues 43–73 (MEDTTPEKSEKVEHKEESATSQKIEETTKNA) is disordered.

The protein belongs to the TatA/E family. As to quaternary structure, the Tat system comprises two distinct complexes: a TatABC complex, containing multiple copies of TatA, TatB and TatC subunits, and a separate TatA complex, containing only TatA subunits. Substrates initially bind to the TatABC complex, which probably triggers association of the separate TatA complex to form the active translocon.

Its subcellular location is the cell inner membrane. In terms of biological role, part of the twin-arginine translocation (Tat) system that transports large folded proteins containing a characteristic twin-arginine motif in their signal peptide across membranes. TatA could form the protein-conducting channel of the Tat system. The polypeptide is Sec-independent protein translocase protein TatA (Campylobacter concisus (strain 13826)).